We begin with the raw amino-acid sequence, 188 residues long: Josephin-2 (188 aa).

In terms of domain architecture, Josephin spans proline 11–serine 188. The active-site Nucleophile is the cysteine 24. Histidine 125 functions as the Proton acceptor in the catalytic mechanism.

Its subcellular location is the cytoplasm. It is found in the cytosol. It carries out the reaction Thiol-dependent hydrolysis of ester, thioester, amide, peptide and isopeptide bonds formed by the C-terminal Gly of ubiquitin (a 76-residue protein attached to proteins as an intracellular targeting signal).. In terms of biological role, cleaves 'Lys-63'-linked poly-ubiquitin chains, and with lesser efficiency 'Lys-48'-linked poly-ubiquitin chains (in vitro). May act as a deubiquitinating enzyme. The chain is Josephin-2 (Josd2) from Mus musculus (Mouse).